The sequence spans 653 residues: 4-hydroxy-2,2'-bipyrrole-5-methanol synthase PigH (653 aa).

One can recognise a Carrier domain in the interval 7-84 (ETYETLKQSV…DALDGILQRE (78 aa)). Ser45 carries the post-translational modification O-(pantetheine 4'-phosphoryl)serine. Residue 354–355 (GY) coordinates pyridoxal 5'-phosphate. Residue His379 coordinates substrate. Positions 426, 454, and 482 each coordinate pyridoxal 5'-phosphate. Lys485 carries the post-translational modification N6-(pyridoxal phosphate)lysine. Residues 512-532 (VFAATIPAPVAAGVIASIDVM) traverse the membrane as a helical segment.

Pyridoxal 5'-phosphate serves as cofactor.

Its subcellular location is the membrane. It participates in antibiotic biosynthesis; prodigiosin biosynthesis. Its function is as follows. Involved in the biosynthesis of 4-methoxy-2,2'-bipyrrole-5-carbaldehyde (MBC), one of the terminal products involved in the biosynthesis of the red antibiotic prodigiosin (Pig). Carrier of the L-malonyl group (malonyl-S-PigH), which is decarboxylated by PigJ to yield a C2 carbanion acetyl-S-PigH. Then the pyrrolyl group of pyrrolyl-S-cysteinyl PigJ intermediate is captured by the C2 carbanion acetyl-S-PigH to yield the pyrrolyl-beta-ketoacyl-S-PigH. In the last step, PigH catalyzes the decarboxylative condensation between the pyrrolyl-beta-ketoacyl (pyrrolyl-beta-ketoacyl-S-PigH) and L-serine to yield 4-hydroxy-2,2'-bipyrrole-5-methanol (HBM). The protein is 4-hydroxy-2,2'-bipyrrole-5-methanol synthase PigH of Serratia sp. (strain ATCC 39006) (Prodigiosinella confusarubida).